Consider the following 140-residue polypeptide: ATP synthase epsilon chain 1 (140 aa).

The protein belongs to the ATPase epsilon chain family. In terms of assembly, F-type ATPases have 2 components, CF(1) - the catalytic core - and CF(0) - the membrane proton channel. CF(1) has five subunits: alpha(3), beta(3), gamma(1), delta(1), epsilon(1). CF(0) has three main subunits: a, b and c.

The protein localises to the cell inner membrane. Produces ATP from ADP in the presence of a proton gradient across the membrane. The chain is ATP synthase epsilon chain 1 from Photobacterium profundum (strain SS9).